The primary structure comprises 152 residues: Flagellar assembly factor FliW (152 aa).

The protein belongs to the FliW family. Interacts with translational regulator CsrA and flagellin(s).

Its subcellular location is the cytoplasm. In terms of biological role, acts as an anti-CsrA protein, binds CsrA and prevents it from repressing translation of its target genes, one of which is flagellin. Binds to flagellin and participates in the assembly of the flagellum. This chain is Flagellar assembly factor FliW, found in Caldicellulosiruptor saccharolyticus (strain ATCC 43494 / DSM 8903 / Tp8T 6331).